The following is a 432-amino-acid chain: NADH-quinone oxidoreductase subunit D (432 aa).

The protein belongs to the complex I 49 kDa subunit family. As to quaternary structure, NDH-1 is composed of 14 different subunits. Subunits NuoB, C, D, E, F, and G constitute the peripheral sector of the complex.

The protein localises to the cell membrane. The catalysed reaction is a quinone + NADH + 5 H(+)(in) = a quinol + NAD(+) + 4 H(+)(out). In terms of biological role, NDH-1 shuttles electrons from NADH, via FMN and iron-sulfur (Fe-S) centers, to quinones in the respiratory chain. The immediate electron acceptor for the enzyme in this species is believed to be a menaquinone. Couples the redox reaction to proton translocation (for every two electrons transferred, four hydrogen ions are translocated across the cytoplasmic membrane), and thus conserves the redox energy in a proton gradient. This is NADH-quinone oxidoreductase subunit D from Mycobacteroides abscessus (strain ATCC 19977 / DSM 44196 / CCUG 20993 / CIP 104536 / JCM 13569 / NCTC 13031 / TMC 1543 / L948) (Mycobacterium abscessus).